Here is a 191-residue protein sequence, read N- to C-terminus: Holliday junction branch migration complex subunit RuvA (191 aa).

The segment at 1–64 (MIGKLTGTLL…EDAQLLYGFA (64 aa)) is domain I. The tract at residues 65–140 (TAPERQAFRA…KLGADLGASH (76 aa)) is domain II. Positions 140–142 (HGP) are flexible linker. A domain III region spans residues 143 to 191 (AVSGAQADILQALLALGYNDKEAAAALKALPAQVEVSDGIKWALKALTK).

Belongs to the RuvA family. Homotetramer. Forms an RuvA(8)-RuvB(12)-Holliday junction (HJ) complex. HJ DNA is sandwiched between 2 RuvA tetramers; dsDNA enters through RuvA and exits via RuvB. An RuvB hexamer assembles on each DNA strand where it exits the tetramer. Each RuvB hexamer is contacted by two RuvA subunits (via domain III) on 2 adjacent RuvB subunits; this complex drives branch migration. In the full resolvosome a probable DNA-RuvA(4)-RuvB(12)-RuvC(2) complex forms which resolves the HJ.

Its subcellular location is the cytoplasm. Functionally, the RuvA-RuvB-RuvC complex processes Holliday junction (HJ) DNA during genetic recombination and DNA repair, while the RuvA-RuvB complex plays an important role in the rescue of blocked DNA replication forks via replication fork reversal (RFR). RuvA specifically binds to HJ cruciform DNA, conferring on it an open structure. The RuvB hexamer acts as an ATP-dependent pump, pulling dsDNA into and through the RuvAB complex. HJ branch migration allows RuvC to scan DNA until it finds its consensus sequence, where it cleaves and resolves the cruciform DNA. In Verminephrobacter eiseniae (strain EF01-2), this protein is Holliday junction branch migration complex subunit RuvA.